Consider the following 216-residue polypeptide: Octanoyltransferase (216 aa).

The BPL/LPL catalytic domain occupies 30–204 (KNNINEIWLL…NCKKFLMMNN (175 aa)). Residues 68-75 (RGGHMTFH), 135-137 (SIG), and 148-150 (GLA) contribute to the substrate site. The active-site Acyl-thioester intermediate is the Cys166.

It belongs to the LipB family.

The protein localises to the cytoplasm. It carries out the reaction octanoyl-[ACP] + L-lysyl-[protein] = N(6)-octanoyl-L-lysyl-[protein] + holo-[ACP] + H(+). The protein operates within protein modification; protein lipoylation via endogenous pathway; protein N(6)-(lipoyl)lysine from octanoyl-[acyl-carrier-protein]: step 1/2. In terms of biological role, catalyzes the transfer of endogenously produced octanoic acid from octanoyl-acyl-carrier-protein onto the lipoyl domains of lipoate-dependent enzymes. Lipoyl-ACP can also act as a substrate although octanoyl-ACP is likely to be the physiological substrate. This chain is Octanoyltransferase, found in Wigglesworthia glossinidia brevipalpis.